Consider the following 87-residue polypeptide: Large ribosomal subunit protein bL27 (87 aa).

It belongs to the bacterial ribosomal protein bL27 family.

The sequence is that of Large ribosomal subunit protein bL27 from Stenotrophomonas maltophilia (strain K279a).